The primary structure comprises 461 residues: MSHIRSRFSKPADELVVRYTTSLPFDWRLYKEDIKCSTAHARMLSKQGIISTEDSQSIINGLNAILTEIETGSFVFKPEMEDIHMAIEGRLFELIGEAAGRLHTARSRNDQVATDVHLFVKNACDKTINKIRTLQGTLLEQAEAHPQTALPGYTHMQIAQPVLLPHHLLAYFEMLERDCGRFTDARKRADVMPLGSGALAGVPYPLDREMVAKELGFSAISQNSLDAVSERDFILEYLSDAAICQMHLSRLSEEMVIWSSAEYAFVELDDAYTTGSSIMPQKKNPDVAELCRGKTGRVYGSLNTMLTVMKGLPLSYNRDLQEDKEPLFDCVDTLGDSLEVFAGMIKTAKFKPERMLRALEKGYVLATDIADYLVGKGESFRNSHGIVARLVSYAVAQNKTFGELSLAEYRQFSNLFEKDIYAVDIKSALNARNLPGGTAPKQIAQAIARAKKILAEAGVKN.

The protein belongs to the lyase 1 family. Argininosuccinate lyase subfamily.

Its subcellular location is the cytoplasm. It catalyses the reaction 2-(N(omega)-L-arginino)succinate = fumarate + L-arginine. The protein operates within amino-acid biosynthesis; L-arginine biosynthesis; L-arginine from L-ornithine and carbamoyl phosphate: step 3/3. The protein is Argininosuccinate lyase of Dehalococcoides mccartyi (strain ATCC BAA-2100 / JCM 16839 / KCTC 5957 / BAV1).